The following is a 289-amino-acid chain: uncharacterized protein (289 aa).

This is an uncharacterized protein from Escherichia coli (strain K12).